The following is an 872-amino-acid chain: MSRWKRRFLILGLSIVVLAVFLLIAGFEGIPFLVDLWWFSAQDYGFYFWQRALYQLVVFIQVSIVFFLIFFVNFWVASHYLGSERPADIPPGAPRKKFKNLFFRFQTGSLWIYTPLSLVLSIIIAWPLFQQWESFLLYLVAPDMGIQDPAYGKNISYYLFSFPIYVLILQRLLISFLLLLASLTLFYWIENRLLSQHGKRLPTGAKWHLSILVLMVFFIEIWDFFLQRNGLVYSEAHQPLFSGPGFVEMRVILPFIWLSMFFLLGIAFFLLLFIHKRKGLKTLAVFSLLFILSLGARHFHFLHWATQEYIVKPNELSIQKPFIENSIKATLDAYKLSNVEVRKFERKKALKNIFNAKVQDLLHNVPVWDKELVGQVYRQLQQLRTYYGFPAENVDRYMINGKKQQVFLGARELNYDKLPSGAQKWVNEHLLYTHGYGLAMSSAGQGQGEASMDWFIRGIPPESDEGFNIKQPGIYYGRGSYRYAIAPNENREFDYPKGNANVMTDYQGKGGVSLSSLFEKYIFSVYFQDKDIFFTTQTYDKSKILFRRNIIERIETLTPYLLLDAAPYLVATTEGLYWIQDAYTASTWYPNADVLGLMRFEFPIPPKGSEKINYIRNSVKIVVDAYHGTVNYYIFDSSDPIIQAYSRIYPGLFKPKEQMPEDIRAHIRYPKDLFEIQMGIYAKYHQTDLEIFYQQEDMWTFAQKYNRESETRLRPYYLTLDLIEENRLDFLLFLPMIVKGQDNMRAMLVAGSDDPYYGKLIAYSFPKGELVFGPAQINAVINEDPKVSAQFTLWNQDDSKVVLGDMIIMPVDQVILYIQPVFLTIKDDVRIPKLERIIISDGRSVVMEPTLMEAYAKLKERIETEGAEGESH.

The next 7 helical transmembrane spans lie at 8-28 (FLILGLSIVVLAVFLLIAGFE), 56-76 (LVVFIQVSIVFFLIFFVNFWV), 109-129 (SLWIYTPLSLVLSIIIAWPLF), 159-179 (LFSFPIYVLILQRLLISFLLL), 207-227 (WHLSILVLMVFFIEIWDFFLQ), 254-274 (PFIWLSMFFLLGIAFFLLLFI), and 282-302 (TLAVFSLLFILSLGARHFHFL).

Belongs to the UPF0182 family.

Its subcellular location is the cell membrane. This Nitrosococcus oceani (strain ATCC 19707 / BCRC 17464 / JCM 30415 / NCIMB 11848 / C-107) protein is UPF0182 protein Noc_0961.